A 272-amino-acid polypeptide reads, in one-letter code: Cytochrome b-c1 complex subunit Rieske, mitochondrial (272 aa).

The Mitochondrial matrix portion of the chain corresponds to 77–104 (VHNDVTVPDFSAYRREDVMDATTSSQTS). A helical transmembrane segment spans residues 105-138 (SEDRKGFSYLVTATACVATAYAAKNVVTQFISSL). Topologically, residues 139–272 (SASADVLALS…FVGDDLVVVG (134 aa)) are mitochondrial intermembrane. The Rieske domain maps to 185-270 (EAEVDVSKLR…YQFVGDDLVV (86 aa)). Positions 215, 217, 218, 234, 237, and 239 each coordinate [2Fe-2S] cluster. The cysteines at positions 220 and 236 are disulfide-linked.

It belongs to the Rieske iron-sulfur protein family. In terms of assembly, component of the ubiquinol-cytochrome c oxidoreductase (cytochrome b-c1 complex, complex III, CIII), a multisubunit enzyme composed of 11 subunits. The complex is composed of 3 respiratory subunits cytochrome b, cytochrome c1 and Rieske protein UQCRFS1, 2 core protein subunits UQCRC1/QCR1 and UQCRC2/QCR2, and 6 low-molecular weight protein subunits UQCRH/QCR6, UQCRB/QCR7, UQCRQ/QCR8, UQCR10/QCR9, UQCR11/QCR10 and subunit 9, the cleavage product of Rieske protein UQCRFS1. The complex exists as an obligatory dimer and forms supercomplexes (SCs) in the inner mitochondrial membrane with NADH-ubiquinone oxidoreductase (complex I, CI) and cytochrome c oxidase (complex IV, CIV), resulting in different assemblies (supercomplex SCI(1)III(2)IV(1) and megacomplex MCI(2)III(2)IV(2)). Incorporation of the Rieske protein UQCRFS1 is the penultimate step in complex III assembly. Interacts with TTC19, which is involved in the clearance of UQCRFS1 fragments. As to quaternary structure, component of the ubiquinol-cytochrome c oxidoreductase (cytochrome b-c1 complex, complex III, CIII). Subunit 9 corresponds to the mitochondrial targeting sequence (MTS) of Rieske protein UQCRFS1. It is retained after processing and incorporated inside complex III, where it remains bound to the complex and localizes between the 2 core subunits UQCRC1/QCR1 and UQCRC2/QCR2. [2Fe-2S] cluster is required as a cofactor. Post-translationally, proteolytic processing is necessary for the correct insertion of UQCRFS1 in the complex III dimer. Several fragments are generated during UQCRFS1 insertion, most probably due to the endogenous matrix-processing peptidase (MPP) activity of the 2 core protein subunits UQCRC1/QCR1 and UQCRC2/QCR2, which are homologous to the 2 mitochondrial-processing peptidase (MPP) subunits beta-MPP and alpha-MPP respectively. The action of the protease is also necessary for the clearance of the UQCRFS1 fragments.

The protein resides in the mitochondrion inner membrane. The enzyme catalyses a quinol + 2 Fe(III)-[cytochrome c](out) = a quinone + 2 Fe(II)-[cytochrome c](out) + 2 H(+)(out). Its function is as follows. Component of the ubiquinol-cytochrome c oxidoreductase, a multisubunit transmembrane complex that is part of the mitochondrial electron transport chain which drives oxidative phosphorylation. The respiratory chain contains 3 multisubunit complexes succinate dehydrogenase (complex II, CII), ubiquinol-cytochrome c oxidoreductase (cytochrome b-c1 complex, complex III, CIII) and cytochrome c oxidase (complex IV, CIV), that cooperate to transfer electrons derived from NADH and succinate to molecular oxygen, creating an electrochemical gradient over the inner membrane that drives transmembrane transport and the ATP synthase. The cytochrome b-c1 complex catalyzes electron transfer from ubiquinol to cytochrome c, linking this redox reaction to translocation of protons across the mitochondrial inner membrane, with protons being carried across the membrane as hydrogens on the quinol. In the process called Q cycle, 2 protons are consumed from the matrix, 4 protons are released into the intermembrane space and 2 electrons are passed to cytochrome c. The Rieske protein is a catalytic core subunit containing a [2Fe-2S] iron-sulfur cluster. It cycles between 2 conformational states during catalysis to transfer electrons from the quinol bound in the Q(0) site in cytochrome b to cytochrome c1. Incorporation of UQCRFS1 is the penultimate step in complex III assembly. Component of the ubiquinol-cytochrome c oxidoreductase (cytochrome b-c1 complex, complex III, CIII). UQCRFS1 undergoes proteolytic processing once it is incorporated in the complex III dimer. One of the fragments, called subunit 9, corresponds to its mitochondrial targeting sequence (MTS). The proteolytic processing is necessary for the correct insertion of UQCRFS1 in the complex III dimer, but the persistence of UQCRFS1-derived fragments may prevent newly imported UQCRFS1 to be processed and assembled into complex III and is detrimental for the complex III structure and function. In Gallus gallus (Chicken), this protein is Cytochrome b-c1 complex subunit Rieske, mitochondrial (UQCRFS1).